The sequence spans 98 residues: Protein translation factor SUI1 homolog (98 aa).

It belongs to the SUI1 family.

This chain is Protein translation factor SUI1 homolog, found in Pyrococcus furiosus (strain ATCC 43587 / DSM 3638 / JCM 8422 / Vc1).